Reading from the N-terminus, the 223-residue chain is Uridylate kinase (223 aa).

An ATP-binding site is contributed by 9 to 10; sequence GS. Gly-42 is a UMP binding site. Gly-43 and Arg-47 together coordinate ATP. Residues Asp-64 and 112–118 each bind UMP; that span reads VSPGQTT. The ATP site is built by Thr-138, Tyr-144, and Asp-147.

The protein belongs to the UMP kinase family. In terms of assembly, homohexamer.

The protein resides in the cytoplasm. The enzyme catalyses UMP + ATP = UDP + ADP. Its pathway is pyrimidine metabolism; CTP biosynthesis via de novo pathway; UDP from UMP (UMPK route): step 1/1. With respect to regulation, inhibited by UTP. Catalyzes the reversible phosphorylation of UMP to UDP. The chain is Uridylate kinase from Methanothrix thermoacetophila (strain DSM 6194 / JCM 14653 / NBRC 101360 / PT) (Methanosaeta thermophila).